A 102-amino-acid chain; its full sequence is Urease subunit beta (102 aa).

It belongs to the urease beta subunit family. As to quaternary structure, heterotrimer of UreA (gamma), UreB (beta) and UreC (alpha) subunits. Three heterotrimers associate to form the active enzyme.

It is found in the cytoplasm. It carries out the reaction urea + 2 H2O + H(+) = hydrogencarbonate + 2 NH4(+). Its pathway is nitrogen metabolism; urea degradation; CO(2) and NH(3) from urea (urease route): step 1/1. The polypeptide is Urease subunit beta (Opitutus terrae (strain DSM 11246 / JCM 15787 / PB90-1)).